The primary structure comprises 422 residues: Synaptotagmin-15 (422 aa).

Topologically, residues 1 to 4 (MAEQ) are extracellular. A helical; Signal-anchor for type III membrane protein membrane pass occupies residues 5 to 27 (LALVIGCIIGGLLLLIGISCCLW). At 28–422 (KRLCTTFTYE…WHALCRPMEP (395 aa)) the chain is on the cytoplasmic side. 2 C2 domains span residues 148–267 (CLGR…VIWR) and 279–400 (EFGD…EHWN).

The protein belongs to the synaptotagmin family. In terms of assembly, homodimer.

The protein localises to the membrane. Its function is as follows. May be involved in the trafficking and exocytosis of secretory vesicles in non-neuronal tissues. The protein is Synaptotagmin-15 (Syt15) of Rattus norvegicus (Rat).